The following is a 368-amino-acid chain: MSESPKKVIVGMSGGVDSSVSAWLLQQQGYQVEGLFMKNWEEDDGEEYCTAAADLADAQAVCDKLGIELHTVNFAAEYWDNVFELFLEEYKAGRTPNPDILCNKEIKFKAFLEFAAEDLGADYIATGHYVRRADVDGKSRLLRGLDGNKDQSYFLYTLGHEQIAQSLFPVGELEKPQVRKIAEDLGLITAKKKDSTGICFIGERKFREFLGRYLPAQPGKIITVDGDEIGQHQGLMYHTLGQRKGLGIGGTKEGTEDPWYVVDKDVENNILVVAQGHEHPRLMSVGLIAQQLHWVDREPFSGTLRCTVKTRYRQTDIPCTVKALDDERIEVIFDEPVAAVTPGQSAVFYNGEVCLGGGIIEQRLPLPV.

Residues 11–18 (GMSGGVDS) and methionine 37 each bind ATP. Residues 97 to 99 (NPD) are interaction with target base in tRNA. Residue cysteine 102 is the Nucleophile of the active site. The cysteines at positions 102 and 199 are disulfide-linked. ATP is bound at residue glycine 127. Positions 149–151 (KDQ) are interaction with tRNA. Residue cysteine 199 is the Cysteine persulfide intermediate of the active site. The tract at residues 311–312 (RY) is interaction with tRNA.

Belongs to the MnmA/TRMU family. In terms of assembly, interacts with TusE.

It is found in the cytoplasm. The catalysed reaction is S-sulfanyl-L-cysteinyl-[protein] + uridine(34) in tRNA + AH2 + ATP = 2-thiouridine(34) in tRNA + L-cysteinyl-[protein] + A + AMP + diphosphate + H(+). Its function is as follows. Catalyzes the 2-thiolation of uridine at the wobble position (U34) of tRNA(Lys), tRNA(Glu) and tRNA(Gln), leading to the formation of s(2)U34, the first step of tRNA-mnm(5)s(2)U34 synthesis. Sulfur is provided by IscS, via a sulfur-relay system. Binds ATP and its substrate tRNAs. In Citrobacter koseri (strain ATCC BAA-895 / CDC 4225-83 / SGSC4696), this protein is tRNA-specific 2-thiouridylase MnmA.